Here is a 324-residue protein sequence, read N- to C-terminus: NAD(P)H-dependent D-xylose reductase xyl1 (324 aa).

Tyrosine 50 (proton donor) is an active-site residue. Histidine 112 provides a ligand contact to substrate. NAD(+) contacts are provided by residues 168–169 (SN), 217–226 (SSFGPTGFME), and 273–283 (KTSRPEVMAQN).

The protein belongs to the aldo/keto reductase family.

The catalysed reaction is an alditol + NAD(+) = an aldose + NADH + H(+). The enzyme catalyses an alditol + NADP(+) = an aldose + NADPH + H(+). It carries out the reaction xylitol + NAD(+) = D-xylose + NADH + H(+). It catalyses the reaction xylitol + NADP(+) = D-xylose + NADPH + H(+). It functions in the pathway carbohydrate metabolism; D-xylose degradation. Its pathway is carbohydrate degradation; L-arabinose degradation via L-arabinitol; D-xylulose 5-phosphate from L-arabinose (fungal route): step 1/5. In terms of biological role, catalyzes the initial reaction in the xylose utilization pathway by reducing D-xylose into xylitol. Xylose is a major component of hemicelluloses such as xylan. Most fungi utilize D-xylose via three enzymatic reactions, xylose reductase (XR), xylitol dehydrogenase (XDH), and xylulokinase, to form xylulose 5-phosphate, which enters pentose phosphate pathway. Also major aldose reductase in pentose and D-galactose catabolism. Reduces the pentose L-arabinose and the hexose D-galactose to their respective polyols. Responsible for extracellular beta-galactosidase formation and cellulase induction during growth on lactose. The chain is NAD(P)H-dependent D-xylose reductase xyl1 (xyl1) from Hypocrea jecorina (Trichoderma reesei).